The chain runs to 173 residues: Alpha-crystallin A chain (173 aa).

Methionine 1 bears the N-acetylmethionine mark. A sHSP domain is found at 52 to 162; that stretch reads LFRGFMDSGI…SHSERPIPVS (111 aa). Residues histidine 100, glutamate 102, histidine 107, and histidine 154 each coordinate Zn(2+). The tract at residues 146-173 is disordered; that stretch reads MMSGLDSSHSERPIPVSREEKPTSAPSS. Positions 153-167 are enriched in basic and acidic residues; it reads SHSERPIPVSREEKP.

Belongs to the small heat shock protein (HSP20) family. As to quaternary structure, heteropolymer composed of three CRYAA and one CRYAB subunits. Inter-subunit bridging via zinc ions enhances stability, which is crucial as there is no protein turn over in the lens. Can also form homodimers and homotetramers (dimers of dimers) which serve as the building blocks of homooligomers. Within homooligomers, the zinc-binding motif is created from residues of 3 different molecules. His-100 and Glu-102 from one molecule are ligands of the zinc ion, and His-107 and His-154 residues from additional molecules complete the site with tetrahedral coordination geometry.

It localises to the cytoplasm. Its subcellular location is the nucleus. Functionally, contributes to the transparency and refractive index of the lens. May act as a chaperone, preventing aggregation of various proteins under a wide range of stress conditions. The protein is Alpha-crystallin A chain (CRYAA) of Aquarana catesbeiana (American bullfrog).